A 97-amino-acid chain; its full sequence is Large ribosomal subunit protein eL21 (97 aa).

The span at 1–24 shows a compositional bias: basic residues; it reads MVQKAHSFRRKTRKKLRKHPRRRG. Residues 1–25 are disordered; it reads MVQKAHSFRRKTRKKLRKHPRRRGL.

Belongs to the eukaryotic ribosomal protein eL21 family.

The protein is Large ribosomal subunit protein eL21 (rpl21e) of Pyrococcus abyssi (strain GE5 / Orsay).